The following is a 90-amino-acid chain: MSAVPFTRVLLISGFLAHLLLSTFVTLTVCKEVTEESDDLSKRNVLQRQLWAVGSFMGKKSLENTNRRSDEDMEISALFRGSPLKVKRSD.

The first 30 residues, 1–30 (MSAVPFTRVLLISGFLAHLLLSTFVTLTVC), serve as a signal peptide directing secretion. A propeptide spanning residues 31–48 (KEVTEESDDLSKRNVLQR) is cleaved from the precursor. Residue Gln49 is modified to Pyrrolidone carboxylic acid. The residue at position 57 (Met57) is a Methionine amide. A propeptide spanning residues 61-90 (SLENTNRRSDEDMEISALFRGSPLKVKRSD) is cleaved from the precursor.

Belongs to the bombesin/neuromedin-B/ranatensin family. Expressed by the skin glands.

The protein resides in the secreted. The polypeptide is [Phe8]-phyllolitorin (Phyllomedusa sauvagei (Sauvage's leaf frog)).